A 683-amino-acid chain; its full sequence is Probable potassium transport system protein Kup 1 (683 aa).

12 helical membrane passes run glycine 13–methionine 33, isoleucine 55–leucine 75, tryptophan 98–proline 118, valine 139–phenylalanine 159, isoleucine 168–glycine 188, alanine 218–serine 238, serine 251–leucine 271, leucine 296–glycine 316, isoleucine 345–phenylalanine 365, glycine 376–methionine 396, threonine 401–alanine 421, and phenylalanine 426–valine 446.

The protein belongs to the HAK/KUP transporter (TC 2.A.72) family.

The protein resides in the cell membrane. The catalysed reaction is K(+)(in) + H(+)(in) = K(+)(out) + H(+)(out). Functionally, transport of potassium into the cell. Likely operates as a K(+):H(+) symporter. This is Probable potassium transport system protein Kup 1 from Lactobacillus johnsonii (strain CNCM I-12250 / La1 / NCC 533).